We begin with the raw amino-acid sequence, 331 residues long: Major ferric iron-binding protein (331 aa).

The first 22 residues, 1 to 22 (MKTSIRYALLAAALTAATPALA), serve as a signal peptide directing secretion. 4 residues coordinate Fe cation: His-31, Glu-79, Tyr-217, and Tyr-218.

The protein belongs to the bacterial solute-binding protein 1 family.

The protein resides in the periplasm. Its function is as follows. This protein may be a central component in the iron-acquisition system. In Neisseria meningitidis serogroup A / serotype 4A (strain DSM 15465 / Z2491), this protein is Major ferric iron-binding protein (fbpA).